Reading from the N-terminus, the 356-residue chain is Pavine N-methyltransferase (356 aa).

S-adenosyl-L-homocysteine contacts are provided by Phe96, Ser97, Gly135, Asn159, Gln163, Asp185, Val186, and Val201. The S-adenosyl-L-methionine site is built by Phe96, Ser97, Gly135, Asn159, Gln163, Asp185, Val186, and Val201. Position 205 (Glu205) interacts with (S)-tetrahydropapaverine. Residue Cys331 is part of the active site.

The protein belongs to the CFA/CMAS family. Homodimer.

It localises to the cytoplasm. The catalysed reaction is (+-)-pavine + S-adenosyl-L-methionine = N-methylpavine + S-adenosyl-L-homocysteine + H(+). It catalyses the reaction (S)-reticuline + S-adenosyl-L-methionine = (S)-tembetarine + S-adenosyl-L-homocysteine + H(+). It carries out the reaction (S)-stylopine + S-adenosyl-L-methionine = (S)-cis-N-methylstylopine + S-adenosyl-L-homocysteine. The enzyme catalyses (S)-scoulerine + S-adenosyl-L-methionine = (S)-cis-N-methylscoulerine + S-adenosyl-L-homocysteine. The catalysed reaction is (S)-tetrahydropapaverine + S-adenosyl-L-methionine = (S)-N-methyltetrahydropapaverine + S-adenosyl-L-homocysteine + H(+). It catalyses the reaction (S)-tetrahydropalmatine + S-adenosyl-L-methionine = (S)-cis-N-methyltetrahydropalmatine + S-adenosyl-L-homocysteine. It functions in the pathway alkaloid biosynthesis. With respect to regulation, in the presence of a racemic mixture of tetrahydropapaverine (THP), one molecule of (S)-THP binds in a productive mode, while one molecule of (R)-THP is bound next to it in a non-productive mode. The (R)-THP seems to inhibit the release of products from the enzyme when higher concentrations of the racemic substrate are added to the reaction. In terms of biological role, N-methyltransferase with a substrate preference for (+-)-pavine and (S)-reticuline, but also active with the protoberberines scoulerine and stylopine and, to a lesser extent, tetrahydropapaverine (THP) and tetrahydropalmatine. Is not active on (R)-reticuline, cryptopine, glaucine, codeine, canadaline, noscapine and berbamine. The chain is Pavine N-methyltransferase from Thalictrum flavum subsp. glaucum (Yellow meadow rue).